A 183-amino-acid polypeptide reads, in one-letter code: Capsid protein (183 aa).

The segment at 136 to 183 (NAPILSTLPETTVVRRRGRSPRRRTPSPRRRRSQSPRRRRTQSRESQC) is disordered. Over residues 149–176 (VRRRGRSPRRRTPSPRRRRSQSPRRRRT) the composition is skewed to basic residues. Residues serine 155, serine 162, and serine 170 each carry the phosphoserine; by host modification. A 1; half-length repeat occupies 155 to 161 (SPRRRTP). Positions 155–177 (SPRRRTPSPRRRRSQSPRRRRTQ) are 3 X 8 AA repeats of S-P-R-R-R-[PR]-[ST]-Q. Residues 158 to 175 (RRTPSPRRRRSQSPRRRR) carry the Bipartite nuclear localization signal motif. 2 repeat units span residues 162-169 (SPRRRRSQ) and 170-177 (SPRRRRTQ). Positions 177–183 (QSRESQC) are RNA binding.

The protein belongs to the orthohepadnavirus core antigen family. As to quaternary structure, homodimerizes, then multimerizes. Interacts with cytosol exposed regions of viral L glycoprotein present in the reticulum-to-Golgi compartment. Interacts with human FLNB. Phosphorylated form interacts with host importin alpha; this interaction depends on the exposure of the NLS, which itself depends upon genome maturation and/or phosphorylation of the capsid protein. Interacts with host NUP153. Post-translationally, phosphorylated by host SRPK1, SRPK2, and maybe protein kinase C or GAPDH. Phosphorylation is critical for pregenomic RNA packaging. Protein kinase C phosphorylation is stimulated by HBx protein and may play a role in transport of the viral genome to the nucleus at the late step during the viral replication cycle.

The protein resides in the virion. The protein localises to the host cytoplasm. Its function is as follows. Self assembles to form an icosahedral capsid. Most capsids appear to be large particles with an icosahedral symmetry of T=4 and consist of 240 copies of capsid protein, though a fraction forms smaller T=3 particles consisting of 180 capsid proteins. Entering capsids are transported along microtubules to the nucleus. Phosphorylation of the capsid is thought to induce exposure of nuclear localization signal in the C-terminal portion of the capsid protein that allows binding to the nuclear pore complex via the importin (karyopherin-) alpha and beta. Capsids are imported in intact form through the nuclear pore into the nuclear basket, where it probably binds NUP153. Only capsids that contain the mature viral genome can release the viral DNA and capsid protein into the nucleoplasm. Immature capsids get stuck in the basket. Capsids encapsulate the pre-genomic RNA and the P protein. Pre-genomic RNA is reverse-transcribed into DNA while the capsid is still in the cytoplasm. The capsid can then either be directed to the nucleus, providing more genomes for transcription, or bud through the endoplasmic reticulum to provide new virions. This chain is Capsid protein, found in Hepatitis B virus genotype D (isolate France/alpha1/1989) (HBV-D).